A 306-amino-acid chain; its full sequence is N-acetylmuramic acid 6-phosphate etherase (306 aa).

Residues T60 to K223 enclose the SIS domain. E88 acts as the Proton donor in catalysis. The active site involves E119.

This sequence belongs to the GCKR-like family. MurNAc-6-P etherase subfamily. As to quaternary structure, homodimer.

It carries out the reaction N-acetyl-D-muramate 6-phosphate + H2O = N-acetyl-D-glucosamine 6-phosphate + (R)-lactate. The protein operates within amino-sugar metabolism; N-acetylmuramate degradation. Functionally, specifically catalyzes the cleavage of the D-lactyl ether substituent of MurNAc 6-phosphate, producing GlcNAc 6-phosphate and D-lactate. The chain is N-acetylmuramic acid 6-phosphate etherase from Gloeobacter violaceus (strain ATCC 29082 / PCC 7421).